Consider the following 785-residue polypeptide: 5-methyltetrahydropteroyltriglutamate--homocysteine methyltransferase (785 aa).

Residues Arg-15–Lys-18 and Lys-121 contribute to the 5-methyltetrahydropteroyltri-L-glutamate site. L-homocysteine contacts are provided by residues Ile-460–Ser-462 and Glu-513. L-methionine-binding positions include Ile-460–Ser-462 and Glu-513. Residues Arg-544–Cys-545 and Trp-590 contribute to the 5-methyltetrahydropteroyltri-L-glutamate site. Position 628 (Asp-628) interacts with L-homocysteine. Asp-628 contacts L-methionine. Glu-634 is a 5-methyltetrahydropteroyltri-L-glutamate binding site. Zn(2+)-binding residues include His-670, Cys-672, and Glu-694. The active-site Proton donor is His-723. A Zn(2+)-binding site is contributed by Cys-755.

Belongs to the vitamin-B12 independent methionine synthase family. Zn(2+) serves as cofactor.

It carries out the reaction 5-methyltetrahydropteroyltri-L-glutamate + L-homocysteine = tetrahydropteroyltri-L-glutamate + L-methionine. Its pathway is amino-acid biosynthesis; L-methionine biosynthesis via de novo pathway; L-methionine from L-homocysteine (MetE route): step 1/1. Its function is as follows. Catalyzes the transfer of a methyl group from 5-methyltetrahydrofolate to homocysteine resulting in methionine formation. This Nitratidesulfovibrio vulgaris (strain ATCC 29579 / DSM 644 / CCUG 34227 / NCIMB 8303 / VKM B-1760 / Hildenborough) (Desulfovibrio vulgaris) protein is 5-methyltetrahydropteroyltriglutamate--homocysteine methyltransferase.